Reading from the N-terminus, the 84-residue chain is MRQIFNRVKWSGRRAYFWFISRGSPGGEEVLSTDDVVEVGANGVVVSVGGRERYIPYHRIVEIRLESGEVLLSRRGGREPSGGL.

The protein belongs to the UPF0248 family.

The sequence is that of UPF0248 protein Pisl_1919 from Pyrobaculum islandicum (strain DSM 4184 / JCM 9189 / GEO3).